Reading from the N-terminus, the 101-residue chain is Integration host factor subunit beta (101 aa).

It belongs to the bacterial histone-like protein family. As to quaternary structure, heterodimer of an alpha and a beta chain.

In terms of biological role, this protein is one of the two subunits of integration host factor, a specific DNA-binding protein that functions in genetic recombination as well as in transcriptional and translational control. This chain is Integration host factor subunit beta, found in Rhodopseudomonas palustris (strain BisB5).